A 365-amino-acid polypeptide reads, in one-letter code: Putative outer membrane porin protein NmpC (365 aa).

The N-terminal stretch at 1-23 is a signal peptide; the sequence is MKKLTVAISAVAASVLMAMSAQA.

Belongs to the Gram-negative porin family. In terms of assembly, homotrimer.

The protein resides in the cell outer membrane. This is Putative outer membrane porin protein NmpC (nmpC) from Escherichia coli (strain K12).